The chain runs to 96 residues: U-scoloptoxin(06)-Sm1a (96 aa).

Positions 1-23 (MNSFSFFLVIFVVLNLQVAKLMA) are cleaved as a signal peptide.

The protein belongs to the scoloptoxin-06 family. Post-translationally, contains 2 disulfide bonds. Expressed by the venom gland.

Its subcellular location is the secreted. This chain is U-scoloptoxin(06)-Sm1a, found in Scolopendra morsitans (Tanzanian blue ringleg centipede).